The primary structure comprises 197 residues: Probable NADPH:quinone oxidoreductase 1 (197 aa).

This sequence belongs to the SsuE family. In terms of assembly, homotetramer. FMN serves as cofactor.

It catalyses the reaction a quinone + NADH + H(+) = a quinol + NAD(+). The enzyme catalyses a quinone + NADPH + H(+) = a quinol + NADP(+). In terms of biological role, the enzyme apparently serves as a quinone reductase in connection with conjugation reactions of hydroquinones involved in detoxification pathways. The protein is Probable NADPH:quinone oxidoreductase 1 of Oryza sativa subsp. japonica (Rice).